A 528-amino-acid chain; its full sequence is J domain-containing protein APJ1 (528 aa).

In terms of domain architecture, J spans Asn-4 to Thr-73. Residues Gly-193–Arg-274 form a CR-type zinc finger. CXXCXGXG motif repeat units lie at residues Cys-206–Gly-213, Cys-218–Gly-225, Cys-246–Gly-253, and Cys-262–Gly-269. Residues Asn-485–Glu-499 show a composition bias toward basic and acidic residues. Residues Asn-485–Tyr-528 are disordered.

Its subcellular location is the cytoplasm. The protein localises to the nucleus. Its function is as follows. Putative chaperone involved in protein folding. Interferes with propagation of [PSI+] prion when overproduced. The sequence is that of J domain-containing protein APJ1 (APJ1) from Saccharomyces cerevisiae (strain ATCC 204508 / S288c) (Baker's yeast).